We begin with the raw amino-acid sequence, 506 residues long: Histidine ammonia-lyase (506 aa).

Residues 143 to 145 (ASG) constitute a cross-link (5-imidazolinone (Ala-Gly)). 2,3-didehydroalanine (Ser) is present on Ser-144.

This sequence belongs to the PAL/histidase family. Contains an active site 4-methylidene-imidazol-5-one (MIO), which is formed autocatalytically by cyclization and dehydration of residues Ala-Ser-Gly.

The protein localises to the cytoplasm. It catalyses the reaction L-histidine = trans-urocanate + NH4(+). It participates in amino-acid degradation; L-histidine degradation into L-glutamate; N-formimidoyl-L-glutamate from L-histidine: step 1/3. The chain is Histidine ammonia-lyase from Salmonella agona (strain SL483).